The primary structure comprises 436 residues: UDP-N-acetylmuramate--L-alanine ligase (436 aa).

110-116 (GAHGKTS) serves as a coordination point for ATP.

Belongs to the MurCDEF family.

The protein localises to the cytoplasm. It carries out the reaction UDP-N-acetyl-alpha-D-muramate + L-alanine + ATP = UDP-N-acetyl-alpha-D-muramoyl-L-alanine + ADP + phosphate + H(+). It functions in the pathway cell wall biogenesis; peptidoglycan biosynthesis. In terms of biological role, cell wall formation. This is UDP-N-acetylmuramate--L-alanine ligase from Lacticaseibacillus casei (strain BL23) (Lactobacillus casei).